We begin with the raw amino-acid sequence, 352 residues long: Long-chain-alcohol O-fatty-acyltransferase (352 aa).

8 consecutive transmembrane segments (helical) span residues 13 to 33 (VWIS…VAPH), 34 to 54 (GGAL…FLPL), 67 to 87 (LYLV…LGPL), 128 to 148 (KVVL…IYEF), 155 to 175 (FVIS…TLAA), 239 to 259 (VAGA…VFFF), 267 to 287 (SWEV…EMVV), and 303 to 323 (GALT…PQLV).

This sequence belongs to the wax synthase family.

The protein resides in the microsome membrane. The catalysed reaction is a long chain fatty alcohol + a fatty acyl-CoA = a wax ester + CoA. In terms of biological role, catalyzes the final step in the synthesis of long-chain linear esters (waxes). Has activity with both saturated and monounsaturated acyl-CoA ranging from 14 to 24 carbons in length, but C20:1 acyl-CoA is the preferred substrate. The polypeptide is Long-chain-alcohol O-fatty-acyltransferase (Simmondsia chinensis (Jojoba)).